The following is an 86-amino-acid chain: Small ribosomal subunit protein uS15 (86 aa).

A disordered region spans residues 1-22 (MSVDTQKVIEDNKRSAQDTGSP). A compositionally biased stretch (basic and acidic residues) spans 7 to 16 (KVIEDNKRSA).

This sequence belongs to the universal ribosomal protein uS15 family. Part of the 30S ribosomal subunit. Forms a bridge to the 50S subunit in the 70S ribosome, contacting the 23S rRNA.

One of the primary rRNA binding proteins, it binds directly to 16S rRNA where it helps nucleate assembly of the platform of the 30S subunit by binding and bridging several RNA helices of the 16S rRNA. Functionally, forms an intersubunit bridge (bridge B4) with the 23S rRNA of the 50S subunit in the ribosome. This chain is Small ribosomal subunit protein uS15, found in Xanthomonas campestris pv. campestris (strain 8004).